Consider the following 431-residue polypeptide: REST corepressor 1 (431 aa).

Basic and acidic residues predominate over residues 1 to 10; sequence MIEKGAEISG. The tract at residues 1 to 53 is disordered; it reads MIEKGAEISGKRRGRNNAANSKSLGTNVNGSNSWEEGSSSSSSDDEPGGGGMR. Positions 17 to 28 are enriched in polar residues; that stretch reads NAANSKSLGTNV. Low complexity predominate over residues 29–42; sequence NGSNSWEEGSSSSS. The region spanning 50–135 is the ELM2 domain; sequence GGMRVGLQYQ…KSLADLLNFT (86 aa). The SANT 1 domain maps to 136 to 187; sequence PFPDEWTVEDRVLFEQAFSFHGKTFHRIQQMLPDKSIASLVKFYYSWKKTRS. Residues 190–262 are disordered; it reads SVMDRHARKQ…NRAKRKPPNG (73 aa). A compositionally biased stretch (basic and acidic residues) spans 224–242; it reads EQPKEAKKEVPKNDTVPHI. A coiled-coil region spans residues 267–314; sequence QEDVEAVSANANAATTVLRQLDMELVSIKRQIQNIKQTNSAFKEKLQG. The region spanning 327 to 378 is the SANT 2 domain; it reads KFNARWTTEEQLLAVQAIRMYGRDFQAISDVIGNKSVVQVKNFFVNYRRRFN.

The protein belongs to the CoREST family. As to quaternary structure, component of a BHC histone deacetylase complex that contains KDM1A. As to expression, expressed in territories in which neurogenesis takes place.

It localises to the nucleus. Its function is as follows. Essential component of the BHC complex, a corepressor complex that represses transcription of neuron-specific genes in non-neuronal cells. The BHC complex is recruited at RE1/NRSE sites by REST and acts by deacetylating and demethylating specific sites on histones, thereby acting as a chromatin modifier. In the BHC complex, it serves as a molecular beacon for the recruitment of molecular machinery that imposes silencing across a chromosomal interval. Plays a central role in demethylation of Lys-4 of histone H3 by promoting demethylase activity of KDM1A on core histones and nucleosomal substrates. The sequence is that of REST corepressor 1 (rcor1) from Xenopus laevis (African clawed frog).